The chain runs to 868 residues: Translation initiation factor IF-2 (868 aa).

The tract at residues 201–269 (KEEVKPEKVS…GTEKSDKYRE (69 aa)) is disordered. Residues 249 to 260 (RGGRSKFKKKKG) show a composition bias toward basic residues. Residues 368–537 (GRAPVVTIMG…LLQSEVLELK (170 aa)) enclose the tr-type G domain. Residues 377 to 384 (GHVDHGKT) form a G1 region. GTP is bound at residue 377–384 (GHVDHGKT). The G2 stretch occupies residues 402–406 (GITQH). The G3 stretch occupies residues 423–426 (DTPG). Residues 423–427 (DTPGH) and 477–480 (NKMD) contribute to the GTP site. Positions 477–480 (NKMD) are G4. The interval 513–515 (SAK) is G5.

This sequence belongs to the TRAFAC class translation factor GTPase superfamily. Classic translation factor GTPase family. IF-2 subfamily.

Its subcellular location is the cytoplasm. In terms of biological role, one of the essential components for the initiation of protein synthesis. Protects formylmethionyl-tRNA from spontaneous hydrolysis and promotes its binding to the 30S ribosomal subunits. Also involved in the hydrolysis of GTP during the formation of the 70S ribosomal complex. This chain is Translation initiation factor IF-2, found in Legionella pneumophila (strain Corby).